Reading from the N-terminus, the 469-residue chain is Ribulose bisphosphate carboxylase large chain (469 aa).

Positions 1 to 2 (MS) are excised as a propeptide. The residue at position 3 (proline 3) is an N-acetylproline. An N6,N6,N6-trimethyllysine modification is found at lysine 14. The substrate site is built by asparagine 123 and threonine 173. The active-site Proton acceptor is the lysine 175. Lysine 177 serves as a coordination point for substrate. Positions 201, 203, and 204 each coordinate Mg(2+). Lysine 201 is subject to N6-carboxylysine. The Proton acceptor role is filled by histidine 294. Positions 295, 327, and 379 each coordinate substrate.

The protein belongs to the RuBisCO large chain family. Type I subfamily. In terms of assembly, heterohexadecamer of 8 large chains and 8 small chains; disulfide-linked. The disulfide link is formed within the large subunit homodimers. The cofactor is Mg(2+). Post-translationally, the disulfide bond which can form in the large chain dimeric partners within the hexadecamer appears to be associated with oxidative stress and protein turnover.

The protein resides in the plastid. It is found in the chloroplast. The enzyme catalyses 2 (2R)-3-phosphoglycerate + 2 H(+) = D-ribulose 1,5-bisphosphate + CO2 + H2O. The catalysed reaction is D-ribulose 1,5-bisphosphate + O2 = 2-phosphoglycolate + (2R)-3-phosphoglycerate + 2 H(+). In terms of biological role, ruBisCO catalyzes two reactions: the carboxylation of D-ribulose 1,5-bisphosphate, the primary event in carbon dioxide fixation, as well as the oxidative fragmentation of the pentose substrate in the photorespiration process. Both reactions occur simultaneously and in competition at the same active site. The chain is Ribulose bisphosphate carboxylase large chain from Iris ensata (Japanese iris).